We begin with the raw amino-acid sequence, 115 residues long: NADH-ubiquinone oxidoreductase chain 3 (115 aa).

3 consecutive transmembrane segments (helical) span residues 3-23, 55-75, and 87-107; these read LFIMLTMSSITVSIVVALNLL, FFMVGILFLLFDLEIAILLPL, and TITWAIIIFLFLFIGLAYEWL.

Belongs to the complex I subunit 3 family.

Its subcellular location is the mitochondrion membrane. It carries out the reaction a ubiquinone + NADH + 5 H(+)(in) = a ubiquinol + NAD(+) + 4 H(+)(out). Functionally, core subunit of the mitochondrial membrane respiratory chain NADH dehydrogenase (Complex I) that is believed to belong to the minimal assembly required for catalysis. Complex I functions in the transfer of electrons from NADH to the respiratory chain. The immediate electron acceptor for the enzyme is believed to be ubiquinone. The protein is NADH-ubiquinone oxidoreductase chain 3 (MT-ND3) of Alligator mississippiensis (American alligator).